The following is a 230-amino-acid chain: MTANVTVSSMYLFTVLLLLFNVYVNSQDTDAQLCQMCEGTIRHDSPVWSFCITKGYVKGHCCFKNNTSDVDTIIGLDLSNCSISHVEHLYNSSTALIIDLSNNPISNLSDYVFQGFSQLTQLLLPSKLECPGGRASWEKVEVKSITRICEGQKNACNQTVQMPLVCPENSLCSPYGPGFFECSCLNNFHGYKCMRQGEFPLVKVLGILTASTVVVSSVLWFTQRRKVKNT.

An N-terminal signal peptide occupies residues 1–26 (MTANVTVSSMYLFTVLLLLFNVYVNS). Residues 27-200 (QDTDAQLCQM…YKCMRQGEFP (174 aa)) lie on the Extracellular side of the membrane. Residues 152–194 (QKNACNQTVQMPLVCPENSLCSPYGPGFFECSCLNNFHGYKCM) enclose the EGF-like domain. 3 disulfide bridges follow: Cys156–Cys172, Cys166–Cys182, and Cys184–Cys193. The helical transmembrane segment at 201-221 (LVKVLGILTASTVVVSSVLWF) threads the bilayer. Topologically, residues 222–230 (TQRRKVKNT) are cytoplasmic.

It localises to the nucleus envelope. The protein resides in the cell membrane. It is found in the lysosome membrane. Functionally, involved in osteoblast cell differentiation. May play a role in inducing the cell cycle arrest. The polypeptide is All-trans retinoic acid-induced differentiation factor (atraid) (Danio rerio (Zebrafish)).